Consider the following 147-residue polypeptide: Hemoglobin subunit beta (147 aa).

V2 carries the N-acetylvaline modification. In terms of domain architecture, Globin spans 3 to 147 (HLSGEEKSAV…VANALAHKYH (145 aa)). T13 bears the Phosphothreonine mark. S45 bears the Phosphoserine mark. K60 is subject to N6-acetyllysine. H64 contributes to the heme b binding site. N6-acetyllysine is present on K83. H93 contacts heme b. C94 carries the post-translational modification S-nitrosocysteine. The residue at position 145 (K145) is an N6-acetyllysine.

Belongs to the globin family. As to quaternary structure, heterotetramer of two alpha chains and two beta chains. As to expression, red blood cells.

Involved in oxygen transport from the lung to the various peripheral tissues. This is Hemoglobin subunit beta (HBB) from Lepus europaeus (European hare).